The chain runs to 96 residues: Aspartyl/glutamyl-tRNA(Asn/Gln) amidotransferase subunit C (96 aa).

The protein belongs to the GatC family. As to quaternary structure, heterotrimer of A, B and C subunits.

The catalysed reaction is L-glutamyl-tRNA(Gln) + L-glutamine + ATP + H2O = L-glutaminyl-tRNA(Gln) + L-glutamate + ADP + phosphate + H(+). It catalyses the reaction L-aspartyl-tRNA(Asn) + L-glutamine + ATP + H2O = L-asparaginyl-tRNA(Asn) + L-glutamate + ADP + phosphate + 2 H(+). Allows the formation of correctly charged Asn-tRNA(Asn) or Gln-tRNA(Gln) through the transamidation of misacylated Asp-tRNA(Asn) or Glu-tRNA(Gln) in organisms which lack either or both of asparaginyl-tRNA or glutaminyl-tRNA synthetases. The reaction takes place in the presence of glutamine and ATP through an activated phospho-Asp-tRNA(Asn) or phospho-Glu-tRNA(Gln). The chain is Aspartyl/glutamyl-tRNA(Asn/Gln) amidotransferase subunit C from Geobacillus kaustophilus (strain HTA426).